An 89-amino-acid polypeptide reads, in one-letter code: UPF0147 protein Saci_0891 (89 aa).

It belongs to the UPF0147 family.

This is UPF0147 protein Saci_0891 from Sulfolobus acidocaldarius (strain ATCC 33909 / DSM 639 / JCM 8929 / NBRC 15157 / NCIMB 11770).